The primary structure comprises 181 residues: Lysozyme C (181 aa).

The signal sequence occupies residues 1–19 (MRIAFFLLILSIIVGLAYG). Residues 139–181 (LTDSRPLGPFNVTEEEMDQLFIDHEIAMAQCEAEKTCNGFDLE) constitute a propeptide that is removed on maturation.

Belongs to the dictyostelium lysozyme family. In terms of processing, contains six disulfide bonds.

Its subcellular location is the cytoplasmic vesicle lumen. The catalysed reaction is Hydrolysis of (1-&gt;4)-beta-linkages between N-acetylmuramic acid and N-acetyl-D-glucosamine residues in a peptidoglycan and between N-acetyl-D-glucosamine residues in chitodextrins.. Functionally, has antibacterial activity. The protein is Lysozyme C (alyC) of Dictyostelium discoideum (Social amoeba).